The primary structure comprises 323 residues: Small ribosomal subunit protein mS35 (323 aa).

The tract at residues 31-59 is disordered; sequence PVPTPSLPERTPGNERPPRRKALPPRTEK. Positions 257–321 form a coiled coil; the sequence is SSERNILETL…YKESVKRLLN (65 aa).

Belongs to the mitochondrion-specific ribosomal protein mS35 family. In terms of assembly, component of the mitochondrial small ribosomal subunit (mt-SSU). Mature mammalian 55S mitochondrial ribosomes consist of a small (28S) and a large (39S) subunit. The 28S small subunit contains a 12S ribosomal RNA (12S mt-rRNA) and 30 different proteins. The 39S large subunit contains a 16S rRNA (16S mt-rRNA), a copy of mitochondrial valine transfer RNA (mt-tRNA(Val)), which plays an integral structural role, and 52 different proteins.

Its subcellular location is the mitochondrion. This chain is Small ribosomal subunit protein mS35, found in Homo sapiens (Human).